The following is a 141-amino-acid chain: MSSRTIMAFDFGTKSIGSAIGQEITGTASPLKAFKAQDGTPNWDDIEKQIKEWNPDLIVVGLPTDLHGKELDTITPRAKKFANRLHGRFGKQVELHDERLSTAEARADLFEFGGYKALSKGNIDCQSAVVILESWFENQWS.

This sequence belongs to the YqgF nuclease family.

The protein localises to the cytoplasm. In terms of biological role, could be a nuclease involved in processing of the 5'-end of pre-16S rRNA. In Aliivibrio fischeri (strain MJ11) (Vibrio fischeri), this protein is Putative pre-16S rRNA nuclease.